The sequence spans 357 residues: Protein-arginine kinase (357 aa).

Residues 24–256 (VIISSRVRLA…LQLVTQERAA (233 aa)) form the Phosphagen kinase C-terminal domain. ATP is bound by residues 27-31 (SSRVR), histidine 93, arginine 127, 178-182 (RASVM), and 209-214 (RGLYGE). The short motif at 339–344 (RDIFRA) is the RDXXRA motif of the pArg binding pocket involved in allosteric regulation element.

It belongs to the ATP:guanido phosphotransferase family.

The enzyme catalyses L-arginyl-[protein] + ATP = N(omega)-phospho-L-arginyl-[protein] + ADP + H(+). Appears to be allosterically activated by the binding of pArg-containing polypeptides to the pArg-binding pocket localized in the C-terminal domain of McsB. Its function is as follows. Catalyzes the specific phosphorylation of arginine residues in proteins. The chain is Protein-arginine kinase from Desulforamulus reducens (strain ATCC BAA-1160 / DSM 100696 / MI-1) (Desulfotomaculum reducens).